The following is a 567-amino-acid chain: Oxygen-dependent choline dehydrogenase (567 aa).

Position 4-33 (4-33 (DYIIIGAGSAGNVLAARLTEDADVTVLLLE)) interacts with FAD. The active-site Proton acceptor is the His-473.

This sequence belongs to the GMC oxidoreductase family. It depends on FAD as a cofactor.

The enzyme catalyses choline + A = betaine aldehyde + AH2. It carries out the reaction betaine aldehyde + NAD(+) + H2O = glycine betaine + NADH + 2 H(+). Its pathway is amine and polyamine biosynthesis; betaine biosynthesis via choline pathway; betaine aldehyde from choline (cytochrome c reductase route): step 1/1. Involved in the biosynthesis of the osmoprotectant glycine betaine. Catalyzes the oxidation of choline to betaine aldehyde and betaine aldehyde to glycine betaine at the same rate. The polypeptide is Oxygen-dependent choline dehydrogenase (Yersinia pestis bv. Antiqua (strain Antiqua)).